The primary structure comprises 226 residues: PKHD-type hydroxylase Plav_0377 (226 aa).

The region spanning Lys78–Ser178 is the Fe2OG dioxygenase domain. Fe cation-binding residues include His96, Asp98, and His159. Arg169 serves as a coordination point for 2-oxoglutarate.

The cofactor is Fe(2+). Requires L-ascorbate as cofactor.

The polypeptide is PKHD-type hydroxylase Plav_0377 (Parvibaculum lavamentivorans (strain DS-1 / DSM 13023 / NCIMB 13966)).